Reading from the N-terminus, the 423-residue chain is Histidine--tRNA ligase (423 aa).

The protein belongs to the class-II aminoacyl-tRNA synthetase family. As to quaternary structure, homodimer.

Its subcellular location is the cytoplasm. It catalyses the reaction tRNA(His) + L-histidine + ATP = L-histidyl-tRNA(His) + AMP + diphosphate + H(+). The sequence is that of Histidine--tRNA ligase from Rhodococcus jostii (strain RHA1).